The sequence spans 440 residues: Chromosome partition protein MukF (440 aa).

A leucine-zipper region spans residues 208-236 (LSETSGTLRELQDTLEAAGDKLQANLLRI).

Belongs to the MukF family. Interacts, and probably forms a ternary complex, with MukE and MukB via its C-terminal region. The complex formation is stimulated by calcium or magnesium. It is required for an interaction between MukE and MukB.

It localises to the cytoplasm. Its subcellular location is the nucleoid. Functionally, involved in chromosome condensation, segregation and cell cycle progression. May participate in facilitating chromosome segregation by condensation DNA from both sides of a centrally located replisome during cell division. Not required for mini-F plasmid partitioning. Probably acts via its interaction with MukB and MukE. Overexpression results in anucleate cells. It has a calcium binding activity. In Salmonella gallinarum (strain 287/91 / NCTC 13346), this protein is Chromosome partition protein MukF.